Here is a 527-residue protein sequence, read N- to C-terminus: V-set and immunoglobulin domain-containing protein 10 (527 aa).

The first 13 residues, 1–13 (MWTRRWIQFLVLC), serve as a signal peptide directing secretion. Ig-like C2-type domains lie at 14 to 111 (LHLW…LKVS), 123 to 212 (PTRT…RQLL), 216 to 306 (PPIT…CQIQ), and 310 to 399 (PLLE…KEIN). The Extracellular portion of the chain corresponds to 23–409 (YLGVFRGDVN…VWLTVNKPHN (387 aa)). Residues Asn32, Asn41, Asn52, Asn64, Asn74, Asn90, Asn129, Asn139, Asn191, Asn206, Asn226, Asn260, Asn276, Asn325, Asn346, and Asn375 are each glycosylated (N-linked (GlcNAc...) asparagine). The cysteines at positions 144 and 194 are disulfide-linked. Residues Cys238 and Cys288 are joined by a disulfide bond. Cysteines 330 and 387 form a disulfide. The helical transmembrane segment at 410–430 (IVGLVTALLLLFLLVVAIITG) threads the bilayer. Over 431–527 (TVLYCDPQIY…TGEENQNEEI (97 aa)) the chain is Cytoplasmic. Positions 501–527 (RPPESTSSDLFSEVSDDTGEENQNEEI) are disordered. Over residues 514-527 (VSDDTGEENQNEEI) the composition is skewed to acidic residues.

Its subcellular location is the membrane. The chain is V-set and immunoglobulin domain-containing protein 10 (vsig10) from Xenopus laevis (African clawed frog).